We begin with the raw amino-acid sequence, 171 residues long: uncharacterized protein (171 aa).

The N-terminal stretch at 1 to 18 (MRYSKLTMLIPCALLLSA) is a signal peptide. C19 carries the N-palmitoyl cysteine lipid modification. C19 carries S-diacylglycerol cysteine lipidation.

The protein localises to the cell membrane. This is an uncharacterized protein from Escherichia coli (strain K12).